The following is a 249-amino-acid chain: 2-dehydro-3-deoxy-L-rhamnonate dehydrogenase (NAD(+)) (249 aa).

Y156 functions as the Proton acceptor in the catalytic mechanism.

The protein belongs to the short-chain dehydrogenases/reductases (SDR) family. Homotetramer.

The enzyme catalyses 2-dehydro-3-deoxy-L-rhamnonate + NAD(+) = 2,4-didehydro-3-deoxy-L-rhamnonate + NADH + H(+). It participates in carbohydrate degradation; L-rhamnose degradation. Functionally, catalyzes the NAD(+)-dependent dehydrogenation of 2-dehydro-3-deoxy-L-rhamnonate to form 2,4-didehydro-3-deoxy-L-rhamnonate. Does not show any detectable activity in the presence of NADP(+). Catalyzes the fourth step in an alternative pathway for rhamnose utilization that does not involve phosphorylated intermediates. The protein is 2-dehydro-3-deoxy-L-rhamnonate dehydrogenase (NAD(+)) of Sphingomonas sp. (strain SKA58).